The chain runs to 365 residues: Quinone oxidoreductase-like protein 2 homolog (365 aa).

The protein belongs to the zinc-containing alcohol dehydrogenase family. Quinone oxidoreductase subfamily.

The chain is Quinone oxidoreductase-like protein 2 homolog from Nematostella vectensis (Starlet sea anemone).